Reading from the N-terminus, the 1212-residue chain is uncharacterized protein (1212 aa).

A disordered region spans residues 783 to 802; that stretch reads TRQDASGGSSSGTKKGEKLQ.

This is an uncharacterized protein from Human herpesvirus 6B (strain Z29) (HHV-6 variant B).